The sequence spans 100 residues: Urease subunit gamma (100 aa).

The protein belongs to the urease gamma subunit family. In terms of assembly, heterotrimer of UreA (gamma), UreB (beta) and UreC (alpha) subunits. Three heterotrimers associate to form the active enzyme.

Its subcellular location is the cytoplasm. It carries out the reaction urea + 2 H2O + H(+) = hydrogencarbonate + 2 NH4(+). The protein operates within nitrogen metabolism; urea degradation; CO(2) and NH(3) from urea (urease route): step 1/1. In Methylobacillus flagellatus (strain ATCC 51484 / DSM 6875 / VKM B-1610 / KT), this protein is Urease subunit gamma.